We begin with the raw amino-acid sequence, 178 residues long: 2-oxo-4-hydroxy-4-carboxy-5-ureidoimidazoline decarboxylase (178 aa).

Catalysis depends on H67, which acts as the Proton donor. Substrate-binding positions include P68, S84–Q88, and F119–A123.

This sequence belongs to the OHCU decarboxylase family.

The protein localises to the peroxisome. It carries out the reaction 5-hydroxy-2-oxo-4-ureido-2,5-dihydro-1H-imidazole-5-carboxylate + H(+) = (S)-allantoin + CO2. It functions in the pathway purine metabolism; urate degradation; (S)-allantoin from urate: step 3/3. Functionally, catalyzes the stereoselective decarboxylation of 2-oxo-4-hydroxy-4-carboxy-5-ureidoimidazoline (OHCU) to (S)-allantoin. In Mus musculus (Mouse), this protein is 2-oxo-4-hydroxy-4-carboxy-5-ureidoimidazoline decarboxylase (Urad).